The chain runs to 133 residues: Aspartate 1-decarboxylase (133 aa).

Catalysis depends on serine 26, which acts as the Schiff-base intermediate with substrate; via pyruvic acid. Pyruvic acid (Ser) is present on serine 26. Threonine 58 serves as a coordination point for substrate. The active-site Proton donor is the tyrosine 59. 74–76 contributes to the substrate binding site; that stretch reads GAA.

The protein belongs to the PanD family. In terms of assembly, heterooctamer of four alpha and four beta subunits. Requires pyruvate as cofactor. In terms of processing, is synthesized initially as an inactive proenzyme, which is activated by self-cleavage at a specific serine bond to produce a beta-subunit with a hydroxyl group at its C-terminus and an alpha-subunit with a pyruvoyl group at its N-terminus.

Its subcellular location is the cytoplasm. The enzyme catalyses L-aspartate + H(+) = beta-alanine + CO2. It participates in cofactor biosynthesis; (R)-pantothenate biosynthesis; beta-alanine from L-aspartate: step 1/1. Functionally, catalyzes the pyruvoyl-dependent decarboxylation of aspartate to produce beta-alanine. The protein is Aspartate 1-decarboxylase of Legionella pneumophila subsp. pneumophila (strain Philadelphia 1 / ATCC 33152 / DSM 7513).